The following is a 164-amino-acid chain: Sorting nexin-3 (164 aa).

Residues 40 to 163 (EIEVCNPKTH…VRFIQDPTFQ (124 aa)) enclose the PX domain. A 1,2-diacyl-sn-glycero-3-phospho-(1D-myo-inositol-3-phosphate)-binding residues include Arg83, Ser85, Lys114, Arg120, and Arg129.

The protein belongs to the sorting nexin family.

It is found in the cytoplasm. The protein localises to the golgi apparatus membrane. Its subcellular location is the prevacuolar compartment membrane. In terms of biological role, required for retention of late Golgi membrane proteins. Component of the retrieval machinery that functions by direct interaction with the cytosolic tails of certain TGN membrane proteins during the sorting/budding process at the prevacuolar compartment. Binds phosphatidylinositol 3-phosphate (PtdIns(P3)). In Kluyveromyces lactis (strain ATCC 8585 / CBS 2359 / DSM 70799 / NBRC 1267 / NRRL Y-1140 / WM37) (Yeast), this protein is Sorting nexin-3 (SNX3).